A 156-amino-acid polypeptide reads, in one-letter code: Ribosomal RNA large subunit methyltransferase H (156 aa).

S-adenosyl-L-methionine is bound by residues leucine 73, glycine 104, and leucine 123–leucine 128.

It belongs to the RNA methyltransferase RlmH family. In terms of assembly, homodimer.

The protein resides in the cytoplasm. The enzyme catalyses pseudouridine(1915) in 23S rRNA + S-adenosyl-L-methionine = N(3)-methylpseudouridine(1915) in 23S rRNA + S-adenosyl-L-homocysteine + H(+). Specifically methylates the pseudouridine at position 1915 (m3Psi1915) in 23S rRNA. This chain is Ribosomal RNA large subunit methyltransferase H, found in Sodalis glossinidius (strain morsitans).